The chain runs to 180 residues: Beta-lactoglobulin-1 (180 aa).

An N-terminal signal peptide occupies residues 1–18; sequence MKCLLLALGLALMCGIQA. 2 disulfide bridges follow: cysteine 84–cysteine 178 and cysteine 124–cysteine 137.

This sequence belongs to the calycin superfamily. Lipocalin family. In terms of assembly, monomer.

It localises to the secreted. Functionally, lactoglobulin is the primary component of whey, it binds retinol and is probably involved in the transport of that molecule. This chain is Beta-lactoglobulin-1 (LGB1), found in Equus caballus (Horse).